A 618-amino-acid chain; its full sequence is 1-deoxy-D-xylulose-5-phosphate synthase (618 aa).

Residues His-74 and 115–117 (GHS) each bind thiamine diphosphate. Asp-146 is a Mg(2+) binding site. Thiamine diphosphate-binding positions include 147 to 148 (GA), Asn-175, Tyr-286, and Glu-366. Mg(2+) is bound at residue Asn-175.

This sequence belongs to the transketolase family. DXPS subfamily. In terms of assembly, homodimer. Requires Mg(2+) as cofactor. Thiamine diphosphate is required as a cofactor.

It carries out the reaction D-glyceraldehyde 3-phosphate + pyruvate + H(+) = 1-deoxy-D-xylulose 5-phosphate + CO2. It functions in the pathway metabolic intermediate biosynthesis; 1-deoxy-D-xylulose 5-phosphate biosynthesis; 1-deoxy-D-xylulose 5-phosphate from D-glyceraldehyde 3-phosphate and pyruvate: step 1/1. In terms of biological role, catalyzes the acyloin condensation reaction between C atoms 2 and 3 of pyruvate and glyceraldehyde 3-phosphate to yield 1-deoxy-D-xylulose-5-phosphate (DXP). This is 1-deoxy-D-xylulose-5-phosphate synthase from Clostridium tetani (strain Massachusetts / E88).